The primary structure comprises 119 residues: MNKQNARHRRGLKAKALIRKTGRSRLVVYRSGVHIYSQIVKSDQLGDKVLVASSTIDKELRSSLTGKSKVEQASLVGQLLGKRAKAAGITQVAFDRAGYKYHGRVKALAEGAREAGLDF.

It belongs to the universal ribosomal protein uL18 family. Part of the 50S ribosomal subunit; part of the 5S rRNA/L5/L18/L25 subcomplex. Contacts the 5S and 23S rRNAs.

In terms of biological role, this is one of the proteins that bind and probably mediate the attachment of the 5S RNA into the large ribosomal subunit, where it forms part of the central protuberance. In Legionella pneumophila (strain Paris), this protein is Large ribosomal subunit protein uL18.